The primary structure comprises 518 residues: Serine--tRNA ligase, mitochondrial (518 aa).

A mitochondrion-targeting transit peptide spans M1 to F34. K110 is modified (N6-acetyllysine). Position 195 is an N6-succinyllysine (K195). T299–E301 serves as a coordination point for L-serine. Position 330 to 332 (R330 to E332) interacts with ATP. K337 is subject to N6-succinyllysine. V345 serves as a coordination point for ATP. E352 is a binding site for L-serine. ATP is bound at residue E418–S421. Residue T453 participates in L-serine binding. Residues P497–S518 form a disordered region.

Belongs to the class-II aminoacyl-tRNA synthetase family. Type-1 seryl-tRNA synthetase subfamily. As to quaternary structure, homodimer. The tRNA molecule probably binds across the dimer. In terms of processing, two N-termini starting at positions 35 and 37 have been identified by direct sequencing.

It is found in the mitochondrion matrix. It catalyses the reaction tRNA(Ser) + L-serine + ATP = L-seryl-tRNA(Ser) + AMP + diphosphate + H(+). The catalysed reaction is tRNA(Sec) + L-serine + ATP = L-seryl-tRNA(Sec) + AMP + diphosphate + H(+). The protein operates within aminoacyl-tRNA biosynthesis; selenocysteinyl-tRNA(Sec) biosynthesis; L-seryl-tRNA(Sec) from L-serine and tRNA(Sec): step 1/1. Its function is as follows. Catalyzes the attachment of serine to tRNA(Ser). Is also probably able to aminoacylate tRNA(Sec) with serine, to form the misacylated tRNA L-seryl-tRNA(Sec), which will be further converted into selenocysteinyl-tRNA(Sec). This is Serine--tRNA ligase, mitochondrial (SARS2) from Bos taurus (Bovine).